The chain runs to 650 residues: Protein kinase domain-containing protein ppk38 (650 aa).

Residues 33-315 (VTVKRYLAEG…MRNVPIHIYD (283 aa)) enclose the Protein kinase domain. Disordered stretches follow at residues 344 to 442 (IHQS…PTTP), 517 to 571 (KVAA…PTNM), and 591 to 616 (RRVSKPEKEHTNPNAEQGDVIPEKPM). Polar residues-rich tracts occupy residues 369–415 (NVNS…NFRV) and 533–554 (SVENPQNNISAPTPSSLQSSNA).

In Schizosaccharomyces pombe (strain 972 / ATCC 24843) (Fission yeast), this protein is Protein kinase domain-containing protein ppk38 (ppk38).